Here is a 919-residue protein sequence, read N- to C-terminus: Chaperone protein ClpC2, chloroplastic (919 aa).

The transit peptide at 1–54 (MAGTLLQPVALGTTFAGRVSGQRWKSHGTRRPPSMLAMSLSRPVKMAAFVGLRS) directs the protein to the chloroplast. The region spanning 89 to 231 (FERFTEKAIK…RTQVIRMIGE (143 aa)) is the Clp R domain. Repeat regions lie at residues 92–157 (FTEK…IGRG) and 167–231 (FTPR…MIGE). The i stretch occupies residues 252–499 (LEEYGTNLTK…RVRLRHAQVP (248 aa)). 297-304 (GEPGVGKT) contributes to the ATP binding site. The region spanning 506–541 (DKELKQITKDKNEAVRSQDFEKAGELRDREMELKAQ) is the UVR domain. The tract at residues 566-757 (VNEADIQHIV…LLIMTSNVGS (192 aa)) is II. 640–647 (GPTGVGKS) provides a ligand contact to ATP.

Belongs to the ClpA/ClpB family. ClpC subfamily.

Its subcellular location is the plastid. The protein resides in the chloroplast. Its function is as follows. Molecular chaperone that may interact with a ClpP-like protease involved in degradation of denatured proteins in the chloroplast. The chain is Chaperone protein ClpC2, chloroplastic (CLPC2) from Oryza sativa subsp. japonica (Rice).